The primary structure comprises 273 residues: Bifunctional protein FolD (273 aa).

NADP(+)-binding positions include 152–154, Thr179, and Ile220; that span reads GRS.

The protein belongs to the tetrahydrofolate dehydrogenase/cyclohydrolase family. Homodimer.

It carries out the reaction (6R)-5,10-methylene-5,6,7,8-tetrahydrofolate + NADP(+) = (6R)-5,10-methenyltetrahydrofolate + NADPH. The enzyme catalyses (6R)-5,10-methenyltetrahydrofolate + H2O = (6R)-10-formyltetrahydrofolate + H(+). It participates in one-carbon metabolism; tetrahydrofolate interconversion. In terms of biological role, catalyzes the oxidation of 5,10-methylenetetrahydrofolate to 5,10-methenyltetrahydrofolate and then the hydrolysis of 5,10-methenyltetrahydrofolate to 10-formyltetrahydrofolate. The polypeptide is Bifunctional protein FolD (Petrotoga mobilis (strain DSM 10674 / SJ95)).